The chain runs to 1372 residues: Cell fusion protein fus1 (1372 aa).

One can recognise a GBD/FH3 domain in the interval 104–522 (LCPDDPNLVN…EQGNNAPGYS (419 aa)). Residues 802–817 (PFKAPPPAPLPPPAPP) carry the SH3-binding motif. An FH2 domain is found at 868–1278 (PGELCNPSKR…AFLRLQALKA (411 aa)).

Belongs to the formin homology family. BNI1 subfamily. In terms of assembly, interacts with actin at the FH2 domain.

The protein localises to the cytoplasm. Its function is as follows. Required for cell fusion. It associates with the pre-zygotic projection tips in conjugating cells. This chain is Cell fusion protein fus1 (fus1), found in Schizosaccharomyces pombe (strain 972 / ATCC 24843) (Fission yeast).